The chain runs to 461 residues: Sensor histidine kinase MctS (461 aa).

The next 2 helical transmembrane spans lie at 7-27 (IIAL…TFIT) and 203-223 (FVIV…TCML). Residue histidine 259 is modified to Phosphohistidine; by autocatalysis. The Histidine kinase domain occupies 360–450 (LYRVAQEAFN…TLTAMMPKSA (91 aa)).

The protein resides in the cell membrane. It catalyses the reaction ATP + protein L-histidine = ADP + protein N-phospho-L-histidine.. Its function is as follows. Member of the two-component regulatory system MctS/MctR, which activates mctP expression. The protein is Sensor histidine kinase MctS of Rhizobium johnstonii (strain DSM 114642 / LMG 32736 / 3841) (Rhizobium leguminosarum bv. viciae).